The chain runs to 365 residues: MKRQLILEDGTVLIGTGFGGEIEKSGEVVFTTGMTGYQETLSDPSYCGQIVTFTYPLIGNYGINRDDFESIHPSVNGLIVNEICNHPSNFRNEISLNDYLKERNIPGLAGIDTRKLTRKIRQYGTLRGRLCNMDADVEYIVSQLKATVFTDHVKRVSTKDPYPSPGRGHRVVLVDFGMKHGILRELNKRDCDVIVVPYNTTAEEILRLSPDGIMLSNGPGDPKDVPEAIEMLKDIIGKVPLFGICLGHQLFALASGANTSKLKFGHRGLNHPVKNLATGKVAITSQNHGYAVEEESVENTDLEITHVALNDGTVEGLRHKKFPAFTVQYHPEASAGPEDANDLFEDFLTMIENFKKEGEELCQNA.

CPSase stretches follow at residues 1 to 166 (MKRQ…PSPG) and 1 to 169 (MKRQ…GRGH). L-glutamine is bound by residues Ser45, Gly218, and Gly220. Residues 170-357 (RVVLVDFGMK…LTMIENFKKE (188 aa)) form the Glutamine amidotransferase type-1 domain. Catalysis depends on Cys245, which acts as the Nucleophile. Positions 246, 249, 287, 289, and 290 each coordinate L-glutamine. Residues His330 and Glu332 contribute to the active site.

Belongs to the CarA family. As to quaternary structure, composed of two chains; the small (or glutamine) chain promotes the hydrolysis of glutamine to ammonia, which is used by the large (or ammonia) chain to synthesize carbamoyl phosphate. Tetramer of heterodimers (alpha,beta)4.

The catalysed reaction is hydrogencarbonate + L-glutamine + 2 ATP + H2O = carbamoyl phosphate + L-glutamate + 2 ADP + phosphate + 2 H(+). It catalyses the reaction L-glutamine + H2O = L-glutamate + NH4(+). It functions in the pathway amino-acid biosynthesis; L-arginine biosynthesis; carbamoyl phosphate from bicarbonate: step 1/1. It participates in pyrimidine metabolism; UMP biosynthesis via de novo pathway; (S)-dihydroorotate from bicarbonate: step 1/3. Functionally, small subunit of the glutamine-dependent carbamoyl phosphate synthetase (CPSase). CPSase catalyzes the formation of carbamoyl phosphate from the ammonia moiety of glutamine, carbonate, and phosphate donated by ATP, constituting the first step of 2 biosynthetic pathways, one leading to arginine and/or urea and the other to pyrimidine nucleotides. The small subunit (glutamine amidotransferase) binds and cleaves glutamine to supply the large subunit with the substrate ammonia. This Bacillus cereus (strain ATCC 14579 / DSM 31 / CCUG 7414 / JCM 2152 / NBRC 15305 / NCIMB 9373 / NCTC 2599 / NRRL B-3711) protein is Carbamoyl phosphate synthase small chain.